We begin with the raw amino-acid sequence, 485 residues long: Glutamyl-tRNA(Gln) amidotransferase subunit A (485 aa).

Catalysis depends on charge relay system residues Lys-79 and Ser-154. Ser-178 (acyl-ester intermediate) is an active-site residue.

This sequence belongs to the amidase family. GatA subfamily. As to quaternary structure, heterotrimer of A, B and C subunits.

It carries out the reaction L-glutamyl-tRNA(Gln) + L-glutamine + ATP + H2O = L-glutaminyl-tRNA(Gln) + L-glutamate + ADP + phosphate + H(+). Allows the formation of correctly charged Gln-tRNA(Gln) through the transamidation of misacylated Glu-tRNA(Gln) in organisms which lack glutaminyl-tRNA synthetase. The reaction takes place in the presence of glutamine and ATP through an activated gamma-phospho-Glu-tRNA(Gln). The polypeptide is Glutamyl-tRNA(Gln) amidotransferase subunit A (Staphylococcus aureus (strain bovine RF122 / ET3-1)).